The following is a 171-amino-acid chain: Sorcin (171 aa).

EF-hand domains are found at residues 3–38 (MDTN…GLGT), 40–69 (LNIR…LGLF), 70–105 (KYVQ…FGYH), and 106–140 (LSPQ…LQTL). D16, D18, S20, S22, E27, D53, D55, N57, T59, E64, D83, D85, S87, S89, and E94 together coordinate Ca(2+).

The protein resides in the cytoplasm. Calcium-binding protein. This Schistosoma japonicum (Blood fluke) protein is Sorcin.